Reading from the N-terminus, the 188-residue chain is Small ribosomal subunit protein uS7 (188 aa).

It belongs to the universal ribosomal protein uS7 family. As to quaternary structure, part of the 30S ribosomal subunit.

Functionally, one of the primary rRNA binding proteins, it binds directly to 16S rRNA where it nucleates assembly of the head domain of the 30S subunit. Is located at the subunit interface close to the decoding center. The polypeptide is Small ribosomal subunit protein uS7 (Methanococcus aeolicus (strain ATCC BAA-1280 / DSM 17508 / OCM 812 / Nankai-3)).